An 828-amino-acid chain; its full sequence is Periplasmic nitrate reductase (828 aa).

A signal peptide (tat-type signal) is located at residues 1–31 (MKLSRRSFMKANAVAAAAAAAGLSVPGVARA). The 4Fe-4S Mo/W bis-MGD-type domain occupies 39 to 95 (IKWDKAPCRFCGTGCGVLVGTQQGRVVACQGDPDAPVNRGLNCIKGYFLPKIMYGKD). C46, C49, C53, and C81 together coordinate [4Fe-4S] cluster. Mo-bis(molybdopterin guanine dinucleotide) is bound by residues K83, Q150, N175, C179, 212-219 (WGANMAEM), 243-247 (STYQH), 262-264 (QSD), M372, Q376, N482, 508-509 (SD), K531, D558, and 718-727 (TGRVLEHWHT). Position 794 (F794) interacts with substrate. Mo-bis(molybdopterin guanine dinucleotide) contacts are provided by N802 and K819.

Belongs to the prokaryotic molybdopterin-containing oxidoreductase family. NasA/NapA/NarB subfamily. As to quaternary structure, component of the periplasmic nitrate reductase NapAB complex composed of NapA and NapB. [4Fe-4S] cluster serves as cofactor. Mo-bis(molybdopterin guanine dinucleotide) is required as a cofactor. Post-translationally, predicted to be exported by the Tat system. The position of the signal peptide cleavage has not been experimentally proven.

The protein resides in the periplasm. It carries out the reaction 2 Fe(II)-[cytochrome] + nitrate + 2 H(+) = 2 Fe(III)-[cytochrome] + nitrite + H2O. Its function is as follows. Catalytic subunit of the periplasmic nitrate reductase complex NapAB. Receives electrons from NapB and catalyzes the reduction of nitrate to nitrite. The chain is Periplasmic nitrate reductase from Escherichia coli O9:H4 (strain HS).